We begin with the raw amino-acid sequence, 153 residues long: MASFKSFLLLALLAIVSEAAPPGHASHGEADSKCPLMVKVLDAVRGIPAANLLVNVFRQTESGKWEQITSGKTTELGEIHNLTTDEQFTEGVYKIEFATKAFWGKLGLSPFHEYVDVVFTANDAGHRHYTIAVLLTPYSFSSTAIVSEPHDDL.

The first 19 residues, 1-19 (MASFKSFLLLALLAIVSEA), serve as a signal peptide directing secretion. Position 34 is a sulfocysteine (C34). The L-thyroxine site is built by K39 and E78. N-linked (GlcNAc...) asparagine glycosylation is present at N81. S141 contacts L-thyroxine.

Belongs to the transthyretin family. As to quaternary structure, homotetramer. Dimer of dimers. In the homotetramer, subunits assemble around a central channel that can accommodate two ligand molecules. Interacts with rbp4. In terms of processing, sulfonation of the reactive cysteine Cys-34 enhances the stability of the native conformation of TTR, avoiding misassembly of the protein leading to amyloid formation. Detected in plasma (at protein level). Expressed during metamorphosis in tadpole liver, but not in tadpole brain nor adult liver. Between 1.5 and 3 days of development, also expressed in the mesoderm of the kidney.

The protein resides in the secreted. In terms of biological role, thyroid hormone-binding protein, with a much higher binding affinity for triiodothyronine (T3) than for thyroxine (T4). Probably transports triiodothyronine from the bloodstream to the brain. The sequence is that of Transthyretin (ttr) from Xenopus laevis (African clawed frog).